The sequence spans 134 residues: Probable glycine cleavage system H protein (134 aa).

In terms of domain architecture, Lipoyl-binding spans 29–110 (TVLVGITDYA…PYENWIAKLK (82 aa)). The residue at position 70 (lysine 70) is an N6-lipoyllysine.

This sequence belongs to the GcvH family. As to quaternary structure, the glycine cleavage system is composed of four proteins: P, T, L and H. (R)-lipoate serves as cofactor.

Functionally, the glycine cleavage system catalyzes the degradation of glycine. The H protein shuttles the methylamine group of glycine from the P protein to the T protein. The sequence is that of Probable glycine cleavage system H protein from Thermococcus gammatolerans (strain DSM 15229 / JCM 11827 / EJ3).